Here is a 932-residue protein sequence, read N- to C-terminus: Calpain-like protease palB/cpr-8 (932 aa).

The Calpain catalytic domain maps to 96 to 419 (KLHGNIFPPW…FDSLYVNWSP (324 aa)). Active-site residues include Cys178, His346, and Asn366. Residues 890–932 (QGHVTEGSDDDGGGGGGGGGGVHVEISSDGVVSIGEWEVADED) form a disordered region. Residues 902–911 (GGGGGGGGGV) show a composition bias toward gly residues.

Belongs to the peptidase C2 family. PalB/RIM13 subfamily.

In terms of biological role, required for the proteolytic cleavage of the transcription factor pacc-1 in response to alkaline ambient pH. The chain is Calpain-like protease palB/cpr-8 (cpr-8) from Neurospora crassa (strain ATCC 24698 / 74-OR23-1A / CBS 708.71 / DSM 1257 / FGSC 987).